The chain runs to 216 residues: MVVIGEKFPEVEVKTTHGVIKLPDYFAEQGKWFVLFSHPADFTPVCTTEFYAMQKRVDQFRELGVEPIGLSVDQVFSHIKWMEWIKENLGEEITFPVIADDRGELADKLGMIPSGATITARAVFIVDDKGIIRAIVYYPAEVGRDWDEILRLVKALKVSDEKGVALPHKWPNNELIGDKAIVPPASTVDEVKQREEAKAKGEIECYDWWFCYKKLE.

One can recognise a Thioredoxin domain in the interval Val-2–Val-158. The active-site Cysteine sulfenic acid (-SOH) intermediate is the Cys-46. Residue Arg-121 participates in substrate binding. Cys-205 and Cys-211 form a disulfide bridge.

Belongs to the peroxiredoxin family. Prx6 subfamily. As to quaternary structure, homodecamer. Pentamer of dimers that assemble into a ring structure.

It localises to the cytoplasm. It catalyses the reaction a hydroperoxide + [thioredoxin]-dithiol = an alcohol + [thioredoxin]-disulfide + H2O. Functionally, thiol-specific peroxidase that catalyzes the reduction of hydrogen peroxide and organic hydroperoxides to water and alcohols, respectively. Plays a role in cell protection against oxidative stress by detoxifying peroxides. This chain is Peroxiredoxin, found in Thermococcus kodakarensis (strain ATCC BAA-918 / JCM 12380 / KOD1) (Pyrococcus kodakaraensis (strain KOD1)).